Here is a 75-residue protein sequence, read N- to C-terminus: Small ribosomal subunit protein bS18 (75 aa).

Belongs to the bacterial ribosomal protein bS18 family. As to quaternary structure, part of the 30S ribosomal subunit. Forms a tight heterodimer with protein bS6.

Its function is as follows. Binds as a heterodimer with protein bS6 to the central domain of the 16S rRNA, where it helps stabilize the platform of the 30S subunit. This Histophilus somni (strain 129Pt) (Haemophilus somnus) protein is Small ribosomal subunit protein bS18.